Consider the following 507-residue polypeptide: Putative pentatricopeptide repeat-containing protein At3g16710, mitochondrial (507 aa).

The N-terminal 48 residues, 1-48 (MRRSIATGFASIVKGFHLHSHRHRLQISNPRTAASLSLCGFCFWIRAF), are a transit peptide targeting the mitochondrion. PPR repeat units lie at residues 47 to 81 (AFSSYRKILRNGLHNLQFNDALDLFTRMVHSRPLP), 82 to 116 (SIIDFTRLLSVIAKMNRYDVVISLFEQMQILGIPP), 117 to 151 (LLCTCNIVMHCVCLSSQPCRASCFLGKMMKLGFEP), 152 to 186 (DLVTFTSLLNGYCHWNRIEDAIALFDQILGMGFKP), 187 to 221 (NVVTYTTLIRCLCKNRHLNHAVELFNQMGTNGSRP), 222 to 256 (NVVTYNALVTGLCEIGRWGDAAWLLRDMMKRRIEP), 257 to 291 (NVITFTALIDAFVKVGKLMEAKELYNVMIQMSVYP), 292 to 326 (DVFTYGSLINGLCMYGLLDEARQMFYLMERNGCYP), 327 to 361 (NEVIYTTLIHGFCKSKRVEDGMKIFYEMSQKGVVA), 362 to 396 (NTITYTVLIQGYCLVGRPDVAQEVFNQMSSRRAPP), 397 to 431 (DIRTYNVLLDGLCCNGKVEKALMIFEYMRKREMDI), 432 to 466 (NIVTYTIIIQGMCKLGKVEDAFDLFCSLFSKGMKP), and 467 to 501 (NVITYTTMISGFCRRGLIHEADSLFKKMKEDGFLP).

Belongs to the PPR family. P subfamily.

Its subcellular location is the mitochondrion. In Arabidopsis thaliana (Mouse-ear cress), this protein is Putative pentatricopeptide repeat-containing protein At3g16710, mitochondrial.